The following is a 993-amino-acid chain: Structural polyprotein (993 aa).

Asp-11 contributes to the a divalent metal cation binding site. Positions 494 to 736 constitute a Peptidase S50 domain; it reads ADKGYEVVAN…AGRQYHLAMA (243 aa). Ser-633 (nucleophile) is an active-site residue. Residue Lys-673 is part of the active site. The segment at 950–993 is disordered; sequence AMEMKHRNPRRALPKPKPKPNAPTQRPPGRLGRWIRTVSDEDLE. The span at 956–967 shows a compositional bias: basic residues; it reads RNPRRALPKPKP. The tract at residues 984–993 is interaction with VP1 protein; it reads IRTVSDEDLE.

As to quaternary structure, homotrimer. A central divalent metal stabilizes the VP2 trimer. Interacts with host ITGA4/ITGB1. Homodimer. Interacts (via C-terminus) with VP1 in the cytoplasm. Interacts with VP2. In terms of processing, specific enzymatic cleavages yield mature proteins. The capsid assembly seems to be regulated by polyprotein processing. The protease VP4 cleaves itself off the polyprotein, thus releasing pre-VP2 and VP3 within the infected cell. During capsid assembly, the C-terminus of pre-VP2 is further processed by VP4, giving rise to VP2, the external capsid protein and three small peptides that all stay closely associated with the capsid.

The protein localises to the virion. It is found in the host cytoplasm. Its function is as follows. Capsid protein VP2 self assembles to form an icosahedral capsid with a T=13 symmetry, about 70 nm in diameter, and consisting of 260 VP2 trimers. The capsid encapsulates the genomic dsRNA. VP2 is also involved in attachment and entry into the host cell by interacting with host ITGA4/ITGB1. Functionally, the precursor of VP2 plays an important role in capsid assembly. First, pre-VP2 and VP2 oligomers assemble to form a procapsid. Then, the pre-VP2 intermediates may be processed into VP2 proteins by proteolytic cleavage mediated by VP4 to obtain the mature virion. The final capsid is composed of pentamers and hexamers but VP2 has a natural tendency to assemble into all-pentameric structures. Therefore pre-VP2 may be required to allow formation of the hexameric structures. Protease VP4 is a serine protease that cleaves the polyprotein into its final products. Pre-VP2 is first partially cleaved, and may be completely processed by VP4 upon capsid maturation. In terms of biological role, capsid protein VP3 plays a key role in virion assembly by providing a scaffold for the capsid made of VP2. May self-assemble to form a T=4-like icosahedral inner-capsid composed of at least 180 trimers. Plays a role in genomic RNA packaging by recruiting VP1 into the capsid and interacting with the dsRNA genome segments to form a ribonucleoprotein complex. Additionally, the interaction of the VP3 C-terminal tail with VP1 removes the inherent structural blockade of the polymerase active site. Thus, VP3 can also function as a transcriptional activator. Its function is as follows. Structural peptide 1 is a small peptide derived from pre-VP2 C-terminus. It destabilizes and perforates cell membranes, suggesting a role during entry. Functionally, structural peptide 2 is a small peptide derived from pVP2 C-terminus. It is not essential for the virus viability, but viral growth is affected when missing. Structural peptide 3 is a small peptide derived from pVP2 C-terminus. It is not essential for the virus viability, but viral growth is affected when missing. In terms of biological role, structural peptide 4 is a small peptide derived from pVP2 C-terminus. It is essential for the virus viability. This is Structural polyprotein from Avian infectious bursal disease virus (strain PBG-98) (IBDV).